A 618-amino-acid polypeptide reads, in one-letter code: NAD(P)H-quinone oxidoreductase subunit 5, organellar chromatophore 2 (618 aa).

Transmembrane regions (helical) follow at residues 16 to 36 (LIPI…TGWI), 43 to 63 (TPAY…SLAL), 99 to 119 (LAAL…ALGY), 129 to 149 (FFAL…SDSL), 152 to 172 (SYFL…FWYA), 190 to 210 (GDVM…GMEF), 220 to 240 (NTLT…GPIG), 267 to 287 (SVVV…LHHS), 291 to 311 (IAVL…VSIA), 318 to 335 (TLSY…IAIA), 348 to 368 (AHAI…AVSN), 390 to 410 (LIAG…CFGL), 419 to 438 (APWF…LNLT), 461 to 481 (WQMA…PWMM), 495 to 515 (AITG…GAIV), 553 to 573 (IVSG…NGFV), and 597 to 617 (SYIL…SWLV).

The protein belongs to the complex I subunit 5 family. In terms of assembly, NDH is composed of at least 16 different subunits, 5 of which are encoded in the nucleus.

It localises to the plastid. It is found in the organellar chromatophore thylakoid membrane. The catalysed reaction is a plastoquinone + NADH + (n+1) H(+)(in) = a plastoquinol + NAD(+) + n H(+)(out). It carries out the reaction a plastoquinone + NADPH + (n+1) H(+)(in) = a plastoquinol + NADP(+) + n H(+)(out). Its function is as follows. NDH shuttles electrons from NAD(P)H:plastoquinone, via FMN and iron-sulfur (Fe-S) centers, to quinones in the photosynthetic chain and possibly in a chloroplast respiratory chain. The immediate electron acceptor for the enzyme in this species is believed to be plastoquinone. Couples the redox reaction to proton translocation, and thus conserves the redox energy in a proton gradient. In Paulinella chromatophora, this protein is NAD(P)H-quinone oxidoreductase subunit 5, organellar chromatophore 2 (ndhF2).